We begin with the raw amino-acid sequence, 508 residues long: NADH-quinone oxidoreductase subunit N 1 (508 aa).

13 helical membrane passes run 2-22, 47-67, 87-107, 126-146, 175-195, 220-240, 260-280, 291-311, 321-341, 351-371, 396-416, 431-453, and 479-499; these read ILGPYIAVSPLIVISLGGALL, ALGTAITLLAGAVFSGAVGFV, FTLFFSFVLCLGGALAALLAG, FSTVGAIILAGAGDLLTLFLG, FLLGSFAAALLLYGGALIYGA, ALLLIGAALVLVGLAFKVSAV, FMAVAVKGAAFATLLRVLLGA, AGWPPAVAVMALLTMTVANLI, MLAYSSIAHAGYLLVGVAATV, VMFYLLAYTVSTVGAFGTLIL, ALAFSLFLLSLAGVPPTAGFF, YTLSVALLLNSVLSAYYYLRVLV, and LVVSAVLVMVLGIWPTTSLGI.

It belongs to the complex I subunit 2 family. In terms of assembly, NDH-1 is composed of 14 different subunits. Subunits NuoA, H, J, K, L, M, N constitute the membrane sector of the complex.

The protein localises to the cell inner membrane. The catalysed reaction is a quinone + NADH + 5 H(+)(in) = a quinol + NAD(+) + 4 H(+)(out). Functionally, NDH-1 shuttles electrons from NADH, via FMN and iron-sulfur (Fe-S) centers, to quinones in the respiratory chain. The immediate electron acceptor for the enzyme in this species is believed to be ubiquinone. Couples the redox reaction to proton translocation (for every two electrons transferred, four hydrogen ions are translocated across the cytoplasmic membrane), and thus conserves the redox energy in a proton gradient. In Sorangium cellulosum (strain So ce56) (Polyangium cellulosum (strain So ce56)), this protein is NADH-quinone oxidoreductase subunit N 1.